Consider the following 283-residue polypeptide: MINYYLLLTKPGIILGNLVTVMAGFLLASKGQFQFGLFFSTILGLAFIMASGCVFNNYIDLEKDRLMKRTQNRPLVIGVIFEKQAIVFGLALAIVGAIILYFYTNLLTLVIAELGFIIYVFFYSIWKSRTVYGTAIGSLAGAVPPLVGYCAVSNQLDLGAFILFAMMVFWQMPHFFSIAIYRLQDYSAANIPVLPLKKGIQITKIRILLYIIIFTLTSSLLTFFHFTGSLYLILTIGLGLTWLLMGLRGLKTSNDQQWAQQMFRFSLVIISVLSLTIPFDLVN.

9 consecutive transmembrane segments (helical) span residues 6–26 (LLLTKPGIILGNLVTVMAGFL), 35–55 (FGLFFSTILGLAFIMASGCVF), 85–105 (AIVFGLALAIVGAIILYFYTN), 106–126 (LLTLVIAELGFIIYVFFYSIW), 131–151 (VYGTAIGSLAGAVPPLVGYCA), 160–180 (AFILFAMMVFWQMPHFFSIAI), 207–227 (ILLYIIIFTLTSSLLTFFHFT), 230–250 (LYLILTIGLGLTWLLMGLRGL), and 262–282 (MFRFSLVIISVLSLTIPFDLV).

Belongs to the UbiA prenyltransferase family. Protoheme IX farnesyltransferase subfamily.

Its subcellular location is the cell inner membrane. The catalysed reaction is heme b + (2E,6E)-farnesyl diphosphate + H2O = Fe(II)-heme o + diphosphate. It functions in the pathway porphyrin-containing compound metabolism; heme O biosynthesis; heme O from protoheme: step 1/1. Converts heme B (protoheme IX) to heme O by substitution of the vinyl group on carbon 2 of heme B porphyrin ring with a hydroxyethyl farnesyl side group. This is Protoheme IX farnesyltransferase from Protochlamydia amoebophila (strain UWE25).